A 351-amino-acid polypeptide reads, in one-letter code: Ribosomal RNA small subunit methyltransferase H (351 aa).

S-adenosyl-L-methionine contacts are provided by residues 48–50, Asp-67, Phe-94, Asp-115, and Gln-122; that span reads GGY. The tract at residues 274–351 is disordered; that stretch reads AAQASRHVPG…PAPQGRGPRR (78 aa).

It belongs to the methyltransferase superfamily. RsmH family.

It is found in the cytoplasm. It carries out the reaction cytidine(1402) in 16S rRNA + S-adenosyl-L-methionine = N(4)-methylcytidine(1402) in 16S rRNA + S-adenosyl-L-homocysteine + H(+). In terms of biological role, specifically methylates the N4 position of cytidine in position 1402 (C1402) of 16S rRNA. The protein is Ribosomal RNA small subunit methyltransferase H of Methylorubrum extorquens (strain ATCC 14718 / DSM 1338 / JCM 2805 / NCIMB 9133 / AM1) (Methylobacterium extorquens).